A 264-amino-acid chain; its full sequence is MSWHGFKKAVNRAGTSVMMKTGHVERTVDREFETEERRYRTMESAAKKLQKEAKGYLDALRAMTASQTRIANTIDAFYGDAGSKDGVSAYYRQVVEDLDADTVKELDGPFRTTVLDPISRFCSYFPDINAAITKRNHKLLDHDAMRAKVQKLVDKPSNDTTKLPRTEKEAAMAKEVYETLNNQLVSELPQLIALRVPYLDPSFEALVKIQLRFCREGYEKMAQVQQYFDNSVREDYSNGLLDDKVEQVLQSMRDLSIAGLNNSQ.

A BAR domain is found at 17–237; sequence VMMKTGHVER…FDNSVREDYS (221 aa). 2 coiled-coil regions span residues 25 to 65 and 165 to 187; these read ERTV…AMTA and RTEKEAAMAKEVYETLNNQLVSE.

The protein localises to the cytoplasm. It is found in the cytoskeleton. Its function is as follows. Involved in cytokinesis and septation where it has a role in the localization of F-actin. This is Protein hob3 (hob3) from Schizosaccharomyces pombe (strain 972 / ATCC 24843) (Fission yeast).